Reading from the N-terminus, the 160-residue chain is 2-C-methyl-D-erythritol 2,4-cyclodiphosphate synthase (160 aa).

2 residues coordinate a divalent metal cation: D9 and H11. 4-CDP-2-C-methyl-D-erythritol 2-phosphate-binding positions include 9-11 (DVH) and 35-36 (HS). Residue H43 participates in a divalent metal cation binding. 4-CDP-2-C-methyl-D-erythritol 2-phosphate contacts are provided by residues 57–59 (DIG), 62–66 (FPDND), and F140.

This sequence belongs to the IspF family. As to quaternary structure, homotrimer. It depends on a divalent metal cation as a cofactor.

The enzyme catalyses 4-CDP-2-C-methyl-D-erythritol 2-phosphate = 2-C-methyl-D-erythritol 2,4-cyclic diphosphate + CMP. The protein operates within isoprenoid biosynthesis; isopentenyl diphosphate biosynthesis via DXP pathway; isopentenyl diphosphate from 1-deoxy-D-xylulose 5-phosphate: step 4/6. Functionally, involved in the biosynthesis of isopentenyl diphosphate (IPP) and dimethylallyl diphosphate (DMAPP), two major building blocks of isoprenoid compounds. Catalyzes the conversion of 4-diphosphocytidyl-2-C-methyl-D-erythritol 2-phosphate (CDP-ME2P) to 2-C-methyl-D-erythritol 2,4-cyclodiphosphate (ME-CPP) with a corresponding release of cytidine 5-monophosphate (CMP). This is 2-C-methyl-D-erythritol 2,4-cyclodiphosphate synthase from Fusobacterium nucleatum subsp. nucleatum (strain ATCC 25586 / DSM 15643 / BCRC 10681 / CIP 101130 / JCM 8532 / KCTC 2640 / LMG 13131 / VPI 4355).